The following is a 724-amino-acid chain: Solute carrier organic anion transporter family member 4C1 (724 aa).

Residues 1–105 (MKSAKGIENL…QCLQRCNTPG (105 aa)) are Cytoplasmic-facing. Residues S15, S16, S24, S26, and S28 each carry the phosphoserine modification. The segment at 24–71 (SASPSQVEVSALSSDPQRENSQPQELQKPQEPQKSPEPSLPSAPPNVS) is disordered. Over residues 25 to 38 (ASPSQVEVSALSSD) the composition is skewed to polar residues. The segment covering 44–60 (SQPQELQKPQEPQKSPE) has biased composition (low complexity). A helical transmembrane segment spans residues 106–126 (GFLLHYCLLAVTQGIVVNGLV). Residues 127-145 (NISISTIEKRYEMKSSLTG) are Extracellular-facing. A helical membrane pass occupies residues 146–166 (LISSSYDISFCLLSLFVSFFG). Topologically, residues 167–172 (ERGHKP) are cytoplasmic. Residues 173–197 (RWLAFAAFMIGLGALVFSLPQFFSG) traverse the membrane as a helical segment. Residues 198–224 (EYKLGSLFEDTCVTTRNSTSCTSSTSS) lie on the Extracellular side of the membrane. A helical membrane pass occupies residues 225-254 (LSNYLYVFILGQLLLGAGGTPLYTLGTAFL). Topologically, residues 255–274 (DDSVPTHKSSLYIGTGYAMS) are cytoplasmic. A helical membrane pass occupies residues 275–295 (ILGPAIGYVLGGQLLTIYVDV). Residues 296–311 (AMGESTDITEDDPRWL) lie on the Extracellular side of the membrane. A helical transmembrane segment spans residues 312 to 336 (GAWWIGFLLSWIFAWSLIIPFSCFP). Residues 337–377 (KHLPGTAEIQAGKTSQAHQSNSNADAKFGKSIKDFPAALKN) lie on the Cytoplasmic side of the membrane. Residues 378 to 399 (LMKNAVFMCLVLSTSSEALITT) form a helical membrane-spanning segment. The Extracellular segment spans residues 400 to 419 (GFATFLPKFIENQFGLTSSF). A helical transmembrane segment spans residues 420–443 (AATLGGAVLIPGAALGQILGGFLV). Over 444-447 (SKFK) the chain is Cytoplasmic. Residues 448–471 (MTCKNTMKFALFTSGVALTLSFVF) form a helical membrane-spanning segment. Topologically, residues 472–580 (IYAKCGNEPF…ETHCAKLPIF (109 aa)) are extracellular. Residues 495-549 (GNLIAPCNANCNCLRSYYYPVCGDGVQYFSPCFAGCSNSVAHRKPKVYYNCSCIE) form the Kazal-like domain. Disulfide bonds link C501–C530, C507–C526, and C516–C547. The chain crosses the membrane as a helical span at residues 581–603 (LCIFFIVIIFTFMAGTPITVSIL). Over 604-612 (RCVNHRQRS) the chain is Cytoplasmic. Residues 613–638 (LALGIQFMVLRLLGTIPGPIIFGFTI) traverse the membrane as a helical segment. Residues 639–672 (DSTCILWDINDCGIKGACRIYDNIKMAHMLVAIS) are Extracellular-facing. A helical transmembrane segment spans residues 673–690 (VTCKVITMFFNGFAIFLY). Over 691-724 (KPPPSATDLSFHKENAVVTNVLAEQDLNKIVKEG) the chain is Cytoplasmic.

This sequence belongs to the organo anion transporter (TC 2.A.60) family.

It is found in the basolateral cell membrane. The enzyme catalyses estrone 3-sulfate(out) = estrone 3-sulfate(in). It catalyses the reaction L-thyroxine(out) = L-thyroxine(in). The catalysed reaction is 3,3',5-triiodo-L-thyronine(out) = 3,3',5-triiodo-L-thyronine(in). It carries out the reaction chenodeoxycholate(out) = chenodeoxycholate(in). The enzyme catalyses glycocholate(out) = glycocholate(in). It catalyses the reaction L-homoarginine(in) = L-homoarginine(out). The catalysed reaction is L-arginine(in) = L-arginine(out). It carries out the reaction N(omega),N(omega)-dimethyl-L-arginine(out) = N(omega),N(omega)-dimethyl-L-arginine(in). Its function is as follows. Mediates the transport of organic anions such as steroids (estrone 3-sulfate, chenodeoxycholate, glycocholate) and thyroid hormones (3,3',5-triiodo-L-thyronine (T3), L-thyroxine (T4)), in the kidney. Capable of transporting cAMP and pharmacological substances such as digoxin, ouabain and methotrexate. Transport is independent of sodium, chloride ion, and ATP. Transport activity is stimulated by an acidic extracellular environment due to increased substrate affinity to the transporter. The driving force for this transport activity is currently not known. The role of hydrogencarbonate (HCO3(-), bicarbonate) as the probable counteranion that exchanges for organic anions is still not well defined. Functions as an uptake transporter at the apical membrane, suggesting a role in renal reabsorption. Involved in the renal secretion of the uremic toxin ADMA (N(omega),N(omega)-dimethyl-L-arginine or asymmetrical dimethylarginine), which is associated to cardiovascular events and mortality, and the structurally related amino acids L-arginine and L-homoarginine (a cardioprotective biomarker). Can act bidirectionally, suggesting a dual protective role of this transport protein; exporting L-homoarginine after being synthesized in proximal tubule cells, and mediating uptake of ADMA from the blood into proximal tubule cells where it is degraded by the enzyme dimethylarginine dimethylaminohydrolase 1 (DDAH1). May be involved in sperm maturation by enabling directed movement of organic anions and compounds within or between cells. This ion-transporting process is important to maintain the strict epididymal homeostasis necessary for sperm maturation. May have a role in secretory functions since seminal vesicle epithelial cells are assumed to secrete proteins involved in decapacitation by modifying surface proteins to facilitate the acquisition of the ability to fertilize the egg. In Pongo abelii (Sumatran orangutan), this protein is Solute carrier organic anion transporter family member 4C1.